Here is a 361-residue protein sequence, read N- to C-terminus: Polyribonucleotide 5'-hydroxyl-kinase PH0197 (361 aa).

43 to 50 (GDVDTGKT) lines the ATP pocket.

It depends on a divalent metal cation as a cofactor.

The catalysed reaction is a 5'-end dephospho-2'-deoxyribonucleoside-DNA + ATP = a 5'-end 5'-phospho-2'-deoxyribonucleoside-DNA + ADP + H(+). The enzyme catalyses a 5'-end dephospho-ribonucleoside-RNA + ATP = a 5'-end 5'-phospho-ribonucleoside-RNA + ADP + H(+). DNA kinase activity is inhibited by 250 mM sodium chloride whereas RNA kinase activity is unaffected. Its function is as follows. Polynucleotide kinase that can phosphorylate the 5'-hydroxyl groups of both single-stranded RNA (ssRNA) and single-stranded DNA (ssDNA). Exhibits a strong preference for ssRNA. This Pyrococcus horikoshii (strain ATCC 700860 / DSM 12428 / JCM 9974 / NBRC 100139 / OT-3) protein is Polyribonucleotide 5'-hydroxyl-kinase PH0197.